The following is a 933-amino-acid chain: MLSTRAASADASDAKDAGTANIPNKRAILSRRKLAEDLETLVAEHGTGDKLRPALIARLRGALNDGRAEVRARFEAKGSGEDCVRQNCYLADGVVRSLADLTVTHIFPTPNPTSGEVFDIVATGGYGRGELAPFSDIDLLFLLPYKRTPRVEQVVEYMLYILWDLGLKVGHAVRSVDDCIRQSKADVTIRTAILESRYLWGPRKLFHRLRRRFDREVVAGTGPEFVEAKLAERDNRHLKLGDSAYVLEPNLKDGKGGLRDLQTLFWIAKYLYRVEDVDDLVGKKVLLPEEAHGFAKAQNFLWTARCHLHYLTGRMEDRMTFDVQTSIGNRMGYTDHAGTKGVERFMKHYFLVAKDVGDLTRIFCAALEAESKRPPKFNILRLAALARRKDVDGFVVDGERLNVRSDRQFKDEPLDMIRLFHTAQQNDIDIHPNALRAITRSLSVVGPKLRADPEANRLFLEILTGRKDPEITLRRMNEAGVLARFIPDFGRVVAQMQYDMYHVYTVDEHTLFALGILHKIEMGELTDELPLSSEVIHKVVSRRALYVAVLLHDIAKGRGGDHSILGARVAEKLCPRLGLTAEETETVAWLVRWHLAMSYTAFKRDLEDDKTVRDFVSLVQSPERLRLLLVLTVADIRAVGPQRWNNWKATLLRELYNRSEEVMSGGLSVEGRGRRIQAAQAALRDELSDFDAADFERHLALGYPAYWLAFDAETLGRQARLVRGRLRDERPLTVNTRIDRGRAITEVTIFATDHHGLFSRLAGALAAAGADIVDARIFTMTNGMALDVFTVQDAAGGGAFESGDKLAKLSVMIEKVLSGQLKPLHDLTKRKAPHASRTRVFHVPPRVLIDNNASTTHTVIEVNGRDRPGLLYDLTRALTNLTLQISSAKISTYGEKAIDVFYVKDVFGLKVTHENKLAQIRERLLHALADPSA.

The interval 1–390 (MLSTRAASAD…RLAALARRKD (390 aa)) is uridylyltransferase. Residues 391-745 (VDGFVVDGER…TRIDRGRAIT (355 aa)) are uridylyl-removing. Positions 506-628 (VDEHTLFALG…VQSPERLRLL (123 aa)) constitute an HD domain. ACT domains lie at 746 to 829 (EVTI…DLTK) and 859 to 933 (VIEV…DPSA).

Belongs to the GlnD family. Mg(2+) is required as a cofactor.

The enzyme catalyses [protein-PII]-L-tyrosine + UTP = [protein-PII]-uridylyl-L-tyrosine + diphosphate. It catalyses the reaction [protein-PII]-uridylyl-L-tyrosine + H2O = [protein-PII]-L-tyrosine + UMP + H(+). Uridylyltransferase (UTase) activity is inhibited by glutamine, while glutamine activates uridylyl-removing (UR) activity. Uridylylation process is dependent on ATP and 2-oxoglutarate, which are effector molecules that likely bind to PII proteins and control their activity. Modifies, by uridylylation and deuridylylation, the PII regulatory proteins GlnB and GlnZ, in response to the nitrogen status of the cell that GlnD senses through the glutamine level. Under low glutamine levels, catalyzes the conversion of the PII proteins and UTP to PII-UMP and PPi, while under higher glutamine levels, GlnD hydrolyzes PII-UMP to PII and UMP (deuridylylation). Thus, controls uridylylation state and activity of the PII proteins, and plays an important role in the regulation of nitrogen fixation and metabolism. In Azospirillum brasilense, this protein is Bifunctional uridylyltransferase/uridylyl-removing enzyme.